A 231-amino-acid chain; its full sequence is GSK-3-binding protein FRAT2 (231 aa).

2 disordered regions span residues 1 to 24 and 53 to 109; these read MPCRREEEEEAGDEAEGEEDDDSF and DTAH…PGAV. Positions 7–23 are enriched in acidic residues; that stretch reads EEEEAGDEAEGEEDDDS. The tract at residues 172-194 is involved in GSK-3 binding; sequence DPHRLLQQLVLSGNLIKEAVRRL. A disordered region spans residues 203–231; the sequence is ATSPASAPGSGGGRSGPDSVTLQPSGAWL.

The protein belongs to the GSK-3-binding protein family. Binds GSK-3 and prevents GSK-3-dependent phosphorylation.

Functionally, positively regulates the Wnt signaling pathway by stabilizing beta-catenin through the association with GSK-3. The polypeptide is GSK-3-binding protein FRAT2 (Frat2) (Mus musculus (Mouse)).